The sequence spans 84 residues: Small ribosomal subunit protein bS18B (84 aa).

Belongs to the bacterial ribosomal protein bS18 family. As to quaternary structure, part of the 30S ribosomal subunit. Forms a tight heterodimer with protein bS6.

In terms of biological role, binds as a heterodimer with protein bS6 to the central domain of the 16S rRNA, where it helps stabilize the platform of the 30S subunit. The chain is Small ribosomal subunit protein bS18B from Mycolicibacterium smegmatis (strain ATCC 700084 / mc(2)155) (Mycobacterium smegmatis).